A 329-amino-acid chain; its full sequence is 7,8-didemethyl-8-hydroxy-5-deazariboflavin synthase (329 aa).

A Radical SAM core domain is found at methionine 1–asparagine 235. [4Fe-4S] cluster is bound by residues cysteine 9, cysteine 13, and cysteine 16.

Belongs to the radical SAM superfamily. CofG family. As to quaternary structure, consists of two subunits, CofG and CofH. [4Fe-4S] cluster serves as cofactor.

The enzyme catalyses 5-amino-5-(4-hydroxybenzyl)-6-(D-ribitylimino)-5,6-dihydrouracil + S-adenosyl-L-methionine = 7,8-didemethyl-8-hydroxy-5-deazariboflavin + 5'-deoxyadenosine + L-methionine + NH4(+) + H(+). The protein operates within cofactor biosynthesis; coenzyme F0 biosynthesis. Its function is as follows. Catalyzes the radical-mediated synthesis of 7,8-didemethyl-8-hydroxy-5-deazariboflavin from 5-amino-5-(4-hydroxybenzyl)-6-(D-ribitylimino)-5,6-dihydrouracil. The protein is 7,8-didemethyl-8-hydroxy-5-deazariboflavin synthase of Methanosarcina acetivorans (strain ATCC 35395 / DSM 2834 / JCM 12185 / C2A).